The primary structure comprises 192 residues: MVDFEELLSKTQEVEKKKIDEELKKAFTEANLIVDEAYNEILSEYSKRIQEIISKNIEALRGEEAKLEVETKRAVNKEKDYWVQQVFQKTLDELEKIANTKDYKNRIESILSRELTEGAIVYCSNNDKKFIEGILTTKRINNVSVEVDNSIKGGVKIYYPDKKLTRDFTLKTILNQIFEDLRDDVARILFGE.

Belongs to the V-ATPase E subunit family. As to quaternary structure, has multiple subunits with at least A(3), B(3), C, D, E, F, H, I and proteolipid K(x).

It localises to the cell membrane. Component of the A-type ATP synthase that produces ATP from ADP in the presence of a proton gradient across the membrane. This chain is A-type ATP synthase subunit E, found in Sulfolobus acidocaldarius (strain ATCC 33909 / DSM 639 / JCM 8929 / NBRC 15157 / NCIMB 11770).